Reading from the N-terminus, the 500-residue chain is ADP,ATP carrier protein 5 (500 aa).

Transmembrane regions (helical) follow at residues 21–41 (IYNY…CILF), 62–82 (IAGF…VIIY), 94–114 (IFYY…FVIY), 149–169 (YIVY…LLFW), 184–204 (FYTL…FLMM), 224–244 (ITLV…CCLL), 287–307 (LWLL…VEAV), 328–348 (LYIL…NNVM), 357–377 (AVIS…LIVF), 381–401 (ILSL…VSIG), and 469–489 (SISP…IYAV).

This sequence belongs to the ADP/ATP translocase tlc family.

The protein localises to the cell membrane. Its function is as follows. Provides the rickettsial cell with host ATP in exchange for rickettsial ADP. This is an obligate exchange system. This energy acquiring activity is an important component of rickettsial parasitism. This Rickettsia bellii (strain RML369-C) protein is ADP,ATP carrier protein 5 (tlcE).